A 196-amino-acid polypeptide reads, in one-letter code: Probable malonic semialdehyde reductase RutE (196 aa).

It belongs to the nitroreductase family. HadB/RutE subfamily. The cofactor is FMN.

The catalysed reaction is 3-hydroxypropanoate + NADP(+) = 3-oxopropanoate + NADPH + H(+). May reduce toxic product malonic semialdehyde to 3-hydroxypropionic acid, which is excreted. This chain is Probable malonic semialdehyde reductase RutE, found in Enterobacter sp. (strain 638).